Here is a 729-residue protein sequence, read N- to C-terminus: Fatty acid oxidation complex subunit alpha (729 aa).

Positions 1–189 (MLYKGDTLYL…KIGLVDGVVK (189 aa)) are enoyl-CoA hydratase/isomerase. Substrate is bound at residue Asp-296. Residues 311 to 729 (ETPKQAAVLG…ARPVGSLKTA (419 aa)) form a 3-hydroxyacyl-CoA dehydrogenase region. NAD(+) is bound by residues Met-324, Asp-343, 400 to 402 (VVE), Lys-407, and Ser-429. The active-site For 3-hydroxyacyl-CoA dehydrogenase activity is His-450. Asn-453 lines the NAD(+) pocket. Positions 500 and 660 each coordinate substrate. Residues 708-729 (RHNEPYYPPVEPARPVGSLKTA) form a disordered region.

In the N-terminal section; belongs to the enoyl-CoA hydratase/isomerase family. The protein in the C-terminal section; belongs to the 3-hydroxyacyl-CoA dehydrogenase family. Heterotetramer of two alpha chains (FadB) and two beta chains (FadA).

The enzyme catalyses a (3S)-3-hydroxyacyl-CoA + NAD(+) = a 3-oxoacyl-CoA + NADH + H(+). The catalysed reaction is a (3S)-3-hydroxyacyl-CoA = a (2E)-enoyl-CoA + H2O. It carries out the reaction a 4-saturated-(3S)-3-hydroxyacyl-CoA = a (3E)-enoyl-CoA + H2O. It catalyses the reaction (3S)-3-hydroxybutanoyl-CoA = (3R)-3-hydroxybutanoyl-CoA. The enzyme catalyses a (3Z)-enoyl-CoA = a 4-saturated (2E)-enoyl-CoA. The catalysed reaction is a (3E)-enoyl-CoA = a 4-saturated (2E)-enoyl-CoA. It participates in lipid metabolism; fatty acid beta-oxidation. In terms of biological role, involved in the aerobic and anaerobic degradation of long-chain fatty acids via beta-oxidation cycle. Catalyzes the formation of 3-oxoacyl-CoA from enoyl-CoA via L-3-hydroxyacyl-CoA. It can also use D-3-hydroxyacyl-CoA and cis-3-enoyl-CoA as substrate. The protein is Fatty acid oxidation complex subunit alpha of Salmonella typhimurium (strain LT2 / SGSC1412 / ATCC 700720).